The sequence spans 63 residues: Large ribosomal subunit protein uL29 (63 aa).

The protein belongs to the universal ribosomal protein uL29 family.

This chain is Large ribosomal subunit protein uL29, found in Colwellia psychrerythraea (strain 34H / ATCC BAA-681) (Vibrio psychroerythus).